A 152-amino-acid polypeptide reads, in one-letter code: Transcriptional regulator MraZ (152 aa).

2 SpoVT-AbrB domains span residues 5–52 and 81–124; these read VTSI…PLHE and ATEC…QDKQ.

The protein belongs to the MraZ family. In terms of assembly, forms oligomers.

The protein localises to the cytoplasm. Its subcellular location is the nucleoid. The protein is Transcriptional regulator MraZ of Actinobacillus pleuropneumoniae serotype 3 (strain JL03).